Here is a 131-residue protein sequence, read N- to C-terminus: Large ribosomal subunit protein bL17 (131 aa).

It belongs to the bacterial ribosomal protein bL17 family. In terms of assembly, part of the 50S ribosomal subunit. Contacts protein L32.

The protein is Large ribosomal subunit protein bL17 of Cupriavidus pinatubonensis (strain JMP 134 / LMG 1197) (Cupriavidus necator (strain JMP 134)).